Consider the following 196-residue polypeptide: MARTAEVVRETKETQIRVWIDLDGTGASTISTGIGFYDHMLESFARHGGFDLKVETKGDLHIDMHHTVEDTGIVLGQAIKEALDGFKGVRRFGHAYIPMDETLTRCAIDLSNRPYLIWKVDFKRPKVGEMDTELFKEFHHAFAMNVGACVHLETLYGDNTHHVAESGFKALARALRQAVEIDPKTGGHAPSTKGVL.

The protein belongs to the imidazoleglycerol-phosphate dehydratase family.

It localises to the cytoplasm. The enzyme catalyses D-erythro-1-(imidazol-4-yl)glycerol 3-phosphate = 3-(imidazol-4-yl)-2-oxopropyl phosphate + H2O. The protein operates within amino-acid biosynthesis; L-histidine biosynthesis; L-histidine from 5-phospho-alpha-D-ribose 1-diphosphate: step 6/9. The protein is Imidazoleglycerol-phosphate dehydratase of Caulobacter sp. (strain K31).